The chain runs to 654 residues: MFLSLLETCIRSRNLVLGQVIHQHLLKRSLTLSSSTVLVNLTRLYASCNEVELARHVFDEIPHPRINPIAWDLMIRAYASNDFAEKALDLYYKMLNSGVRPTKYTYPFVLKACAGLRAIDDGKLIHSHVNCSDFATDMYVCTALVDFYAKCGELEMAIKVFDEMPKRDMVAWNAMISGFSLHCCLTDVIGLFLDMRRIDGLSPNLSTIVGMFPALGRAGALREGKAVHGYCTRMGFSNDLVVKTGILDVYAKSKCIIYARRVFDLDFKKNEVTWSAMIGGYVENEMIKEAGEVFFQMLVNDNVAMVTPVAIGLILMGCARFGDLSGGRCVHCYAVKAGFILDLTVQNTIISFYAKYGSLCDAFRQFSEIGLKDVISYNSLITGCVVNCRPEESFRLFHEMRTSGIRPDITTLLGVLTACSHLAALGHGSSCHGYCVVHGYAVNTSICNALMDMYTKCGKLDVAKRVFDTMHKRDIVSWNTMLFGFGIHGLGKEALSLFNSMQETGVNPDEVTLLAILSACSHSGLVDEGKQLFNSMSRGDFNVIPRIDHYNCMTDLLARAGYLDEAYDFVNKMPFEPDIRVLGTLLSACWTYKNAELGNEVSKKMQSLGETTESLVLLSNTYSAAERWEDAARIRMIQKKRGLLKTPGYSWVDV.

PPR repeat units follow at residues 1–32, 34–64, 67–101, 102–136, 137–171, 172–203, 204–238, 239–269, 270–304, 307–341, 342–372, 373–407, 408–442, 443–473, 474–508, 509–543, and 546–576; these read MFLS…SLTL, SSTV…IPHP, NPIA…GVRP, TKYT…DFAT, DMYV…DMVA, WNAM…GLSP, NLST…GFSN, DLVV…DFKK, NEVT…DNVA, TPVA…GFIL, DLTV…IGLK, DVIS…GIRP, DITT…GYAV, NTSI…MHKR, DIVS…GVNP, DEVT…DFNV, and RIDH…MPFE. A type E motif; degenerate region spans residues 581-654; the sequence is VLGTLLSACW…KTPGYSWVDV (74 aa).

Belongs to the PPR family. PCMP-E subfamily.

The polypeptide is Pentatricopeptide repeat-containing protein At3g16610 (PCMP-E91) (Arabidopsis thaliana (Mouse-ear cress)).